A 276-amino-acid chain; its full sequence is 2-dehydro-3-deoxyphosphooctonate aldolase (276 aa).

Belongs to the KdsA family.

It localises to the cytoplasm. The enzyme catalyses D-arabinose 5-phosphate + phosphoenolpyruvate + H2O = 3-deoxy-alpha-D-manno-2-octulosonate-8-phosphate + phosphate. Its pathway is carbohydrate biosynthesis; 3-deoxy-D-manno-octulosonate biosynthesis; 3-deoxy-D-manno-octulosonate from D-ribulose 5-phosphate: step 2/3. It functions in the pathway bacterial outer membrane biogenesis; lipopolysaccharide biosynthesis. The protein is 2-dehydro-3-deoxyphosphooctonate aldolase of Helicobacter pylori (strain HPAG1).